Consider the following 293-residue polypeptide: Heterogeneous nuclear ribonucleoprotein C-like 1 (293 aa).

The RRM domain occupies 16 to 87; sequence SRVFIGNLNT…QVVDINLAAE (72 aa). Disordered stretches follow at residues 137-177 and 206-293; these read ALAV…KLKG and KEQS…QDDS. Residues 177–225 adopt a coiled-coil conformation; sequence GDDLQAIKQELTQIKQKVDSLLENLEKIEKEQSKQEVEVKNAKSEEEQS. 2 stretches are compositionally biased toward basic and acidic residues: residues 206 to 222 and 229 to 240; these read KEQSKQEVEVKNAKSEE and MKKDETHVKMES. Acidic residues-rich tracts occupy residues 242–267 and 275–284; these read GGAEDSAEEGDPLDDDVNEDQGDDQL and KEAEEGEDDR.

The protein belongs to the RRM HNRPC family. RALY subfamily.

The protein resides in the nucleus. May play a role in nucleosome assembly by neutralizing basic proteins such as A and B core hnRNPs. This chain is Heterogeneous nuclear ribonucleoprotein C-like 1 (HNRNPCL1), found in Homo sapiens (Human).